We begin with the raw amino-acid sequence, 126 residues long: MSAPNPKAFPLADSALTQQILDVVQQSQNLRQLKKGANEATKTLNRGISEFIIMAADTEPIEILLHLPLLCEDKNVPYVFVPSKTALGRACGVSRPVIAASVTTNEASAMKNQIYGIKDKIETLLI.

It belongs to the eukaryotic ribosomal protein eL8 family. As to quaternary structure, component of the U3 snoRNP particle. Binds to the C'/D and B/C motifs in U3 snoRNA. Component of the 25S U4/U6.U5 tri-snRNP particle, a subcomplex of the spliceosome. Binds to the 5' stem-loop of U4 snRNA.

Its subcellular location is the nucleus. It localises to the nucleolus. Its function is as follows. Common component of the spliceosome and rRNA processing machinery. In association with the spliceosomal U4/U6.U5 tri-snRNP particle, required for splicing of pre-mRNA. In association with box C/D snoRNPs, required for processing of pre-ribosomal RNA (rRNA) and site-specific 2'-O-methylation of substrate RNAs. Essential for the accumulation and stability of U4 snRNA, U6 snRNA, and box C/D snoRNAs. In Debaryomyces hansenii (strain ATCC 36239 / CBS 767 / BCRC 21394 / JCM 1990 / NBRC 0083 / IGC 2968) (Yeast), this protein is 13 kDa ribonucleoprotein-associated protein (SNU13).